A 515-amino-acid polypeptide reads, in one-letter code: uncharacterized protein (515 aa).

The interval 146-171 (SSEVDRNSETEGTREENSNTSDWDEQ) is disordered. The span at 148–162 (EVDRNSETEGTREEN) shows a compositional bias: basic and acidic residues.

The protein resides in the cytoplasm. Its subcellular location is the nucleus. This is an uncharacterized protein from Schizosaccharomyces pombe (strain 972 / ATCC 24843) (Fission yeast).